We begin with the raw amino-acid sequence, 1259 residues long: Autism susceptibility gene 2 protein (1259 aa).

Disordered stretches follow at residues 1 to 87, 108 to 285, 299 to 470, 771 to 1027, and 1119 to 1146; these read MDGP…EEDI, LKPQ…QDCC, CPQV…PPPP, PNSM…MTVG, and REPH…HERG. A compositionally biased stretch (basic residues) spans 8 to 17; the sequence is HGLRKKRRSR. A compositionally biased stretch (gly residues) spans 28-41; sequence GGLGAGAAGGGGAG. Basic and acidic residues predominate over residues 108-118; it reads LKPQERVEKRQ. The segment covering 136 to 147 has biased composition (basic residues); the sequence is HSKKSRLSHPHH. The segment covering 148–158 has biased composition (basic and acidic residues); sequence YSSDRENDRNL. Positions 177–192 are enriched in polar residues; that stretch reads PGQNSCRDSDSESASG. Residues 276–285 are compositionally biased toward basic and acidic residues; that stretch reads RSQEKSQDCC. The interval 289-472 is important for regulation of lamellipodia formation; that stretch reads IFEPVVLKDP…PTALPPPPPL (184 aa). Composition is skewed to pro residues over residues 331–345 and 353–365; these read PPQP…PQGP and APQP…PRPQ. Residues 386–410 are compositionally biased toward low complexity; sequence SLSQPLSAYNSSSLSLNSLSSSRSS. The segment covering 436 to 447 has biased composition (polar residues); that stretch reads PNHSPLHSFTPT. The span at 801–810 shows a compositional bias: pro residues; that stretch reads PSFPTPPPWL. Composition is skewed to basic and acidic residues over residues 813 to 850, 876 to 935, and 960 to 993; these read GELE…VEKR, IRAH…EAKQ, and REAE…HDLP. Residues 1125-1134 show a composition bias toward basic residues; the sequence is SHHHHHHHHP. S1198 and S1233 each carry phosphoserine. Positions 1217–1259 are disordered; it reads LSAPPPLISTLGGRPVSPRRTTPLSAEIRERPPSHTLKDIEAR. Positions 1243–1259 are enriched in basic and acidic residues; sequence EIRERPPSHTLKDIEAR.

Belongs to the AUTS2 family. Component of a PRC1-like complex that contains PCGF5, RNF2, CSNK2B, RYBP and AUTS2. Within this complex, interacts directly with PCGF5 and CSNK2B. Interacts with the histone acetyltransferase EP300/p300. Interacts (via Pro-rich region) with PREX1, DOCK1 and ELMO2. Strongly expressed in brain, skeletal muscle and kidney. Also expressed in placenta, lung and leukocytes.

It is found in the nucleus. The protein localises to the cytoplasm. It localises to the cytoskeleton. The protein resides in the cell projection. Its subcellular location is the growth cone. Component of a Polycomb group (PcG) multiprotein PRC1-like complex, a complex class required to maintain the transcriptionally repressive state of many genes, including Hox genes, throughout development. PcG PRC1 complex acts via chromatin remodeling and modification of histones; it mediates monoubiquitination of histone H2A 'Lys-119', rendering chromatin heritably changed in its expressibility. The PRC1-like complex that contains PCGF5, RNF2, CSNK2B, RYBP and AUTS2 has decreased histone H2A ubiquitination activity, due to the phosphorylation of RNF2 by CSNK2B. As a consequence, the complex mediates transcriptional activation. In the cytoplasm, plays a role in axon and dendrite elongation and in neuronal migration during embryonic brain development. Promotes reorganization of the actin cytoskeleton, lamellipodia formation and neurite elongation via its interaction with RAC guanine nucleotide exchange factors, which then leads to the activation of RAC1. This Homo sapiens (Human) protein is Autism susceptibility gene 2 protein (AUTS2).